The following is a 211-amino-acid chain: Redox-sensing transcriptional repressor Rex (211 aa).

Residues T13 to F52 constitute a DNA-binding region (H-T-H motif). G87–G92 contributes to the NAD(+) binding site.

Belongs to the transcriptional regulatory Rex family. Homodimer.

The protein resides in the cytoplasm. Modulates transcription in response to changes in cellular NADH/NAD(+) redox state. This is Redox-sensing transcriptional repressor Rex from Thermus aquaticus.